A 556-amino-acid chain; its full sequence is Formate--tetrahydrofolate ligase (556 aa).

Position 65–72 (65–72 (TPAGEGKS)) interacts with ATP.

Belongs to the formate--tetrahydrofolate ligase family.

The enzyme catalyses (6S)-5,6,7,8-tetrahydrofolate + formate + ATP = (6R)-10-formyltetrahydrofolate + ADP + phosphate. It functions in the pathway one-carbon metabolism; tetrahydrofolate interconversion. In Streptococcus suis (strain 98HAH33), this protein is Formate--tetrahydrofolate ligase.